Reading from the N-terminus, the 399-residue chain is Guanine nucleotide-binding protein negative regulator 1 (399 aa).

WD repeat units follow at residues 44–83 (KPLNFFHSSRWSPDGSTILSLTEDQCLNCWNVPFSDLSKK), 105–145 (YSYS…NKAS), 150–194 (DHQE…VMTT), 207–247 (SLKG…PCQL), 252–292 (ERGN…DMVY), and 296–337 (GHRG…EETH).

Interacts with gpa1.

The protein localises to the cytoplasm. Its function is as follows. Negatively regulates the pheromone-response pathway. Acts as a structural mimic of the G protein beta subunit thereby interacting with gpa1 which then inhibits gpa1 signaling. This Schizosaccharomyces pombe (strain 972 / ATCC 24843) (Fission yeast) protein is Guanine nucleotide-binding protein negative regulator 1 (gnr1).